The sequence spans 581 residues: La-related protein 7 (581 aa).

Met-1 is modified (N-acetylmethionine). Polar residues predominate over residues 1–10 (METESGNQKN). Disordered stretches follow at residues 1–28 (METESGNQKNVMEEESTEKKKEVEKKKR), 188–368 (NPPE…ERHK), and 410–440 (KSESEMETDGGVPQKTGMKNEKTNSEECPTQ). Positions 28–122 (RSRVKQVLAD…KPLGERPKDE (95 aa)) constitute an HTH La-type RNA-binding domain. The region spanning 125–203 (RTVYVELLPK…PRKPGIFPKT (79 aa)) is the RRM domain. The span at 219–228 (KKKKKKKGRM) shows a compositional bias: basic residues. Residues 229–240 (KKEDNVQAKEEN) show a composition bias toward basic and acidic residues. A Glycyl lysine isopeptide (Lys-Gly) (interchain with G-Cter in SUMO2) cross-link involves residue Lys-237. Position 257 is a phosphothreonine (Thr-257). Phosphoserine is present on residues Ser-258, Ser-261, Ser-273, Ser-298, Ser-299, and Ser-300. Over residues 316-335 (IQKDIIKEPSEASKENRDIE) the composition is skewed to basic and acidic residues. Ser-337 bears the Phosphoserine mark. A Phosphothreonine modification is found at Thr-338. A Phosphoserine modification is found at Ser-351. Basic residues predominate over residues 354–367 (KTKRKHKKKHKERH). A Glycyl lysine isopeptide (Lys-Gly) (interchain with G-Cter in SUMO2) cross-link involves residue Lys-410. Positions 449-562 (QFVSGVIVKI…TEKLITKAEK (114 aa)) constitute a xRRM domain.

The protein belongs to the LARP7 family. As to quaternary structure, core component of the 7SK RNP complex, at least composed of 7SK RNA, LARP7, MEPCE, HEXIM1 (or HEXIM2) and P-TEFb (composed of CDK9 and CCNT1/cyclin-T1). Interacts with METTL16. Interacts with RBM7; upon genotoxic stress this interaction is enhanced, triggering the release of inactive P-TEFb complex from the core, yielding to P-TEFb complex activation. Associates with box C/D small nucleolar ribonucleoprotein (snoRNP) complexes.

Its subcellular location is the nucleus. The protein localises to the nucleoplasm. Functionally, RNA-binding protein that specifically binds distinct small nuclear RNA (snRNAs) and regulates their processing and function. Specifically binds the 7SK snRNA (7SK RNA) and acts as a core component of the 7SK ribonucleoprotein (RNP) complex, thereby acting as a negative regulator of transcription elongation by RNA polymerase II. The 7SK RNP complex sequesters the positive transcription elongation factor b (P-TEFb) in a large inactive 7SK RNP complex preventing RNA polymerase II phosphorylation and subsequent transcriptional elongation. The 7SK RNP complex also promotes snRNA gene transcription by RNA polymerase II via interaction with the little elongation complex (LEC). LARP7 specifically binds to the highly conserved 3'-terminal U-rich stretch of 7SK RNA; on stimulation, remains associated with 7SK RNA, whereas P-TEFb is released from the complex. LARP7 also acts as a regulator of mRNA splicing fidelity by promoting U6 snRNA processing. Specifically binds U6 snRNAs and associates with a subset of box C/D RNP complexes: promotes U6 snRNA 2'-O-methylation by facilitating U6 snRNA loading into box C/D RNP complexes. U6 snRNA 2'-O-methylation is required for mRNA splicing fidelity. Binds U6 snRNAs with a 5'-CAGGG-3' sequence motif. U6 snRNA processing is required for spermatogenesis. The sequence is that of La-related protein 7 from Macaca fascicularis (Crab-eating macaque).